The chain runs to 239 residues: Probable transcriptional regulatory protein BLi00754/BL02339 (239 aa).

Belongs to the TACO1 family. YeeN subfamily.

Its subcellular location is the cytoplasm. The polypeptide is Probable transcriptional regulatory protein BLi00754/BL02339 (Bacillus licheniformis (strain ATCC 14580 / DSM 13 / JCM 2505 / CCUG 7422 / NBRC 12200 / NCIMB 9375 / NCTC 10341 / NRRL NRS-1264 / Gibson 46)).